The following is a 245-amino-acid chain: Fibroblast growth factor 13 (245 aa).

Residues 1 to 36 (MAAAIASSLIRQKRQAREREKSNACKCVSSPSKGKT) form a disordered region. Residues 1–62 (MAAAIASSLI…GSKKRRRRRP (62 aa)) form a mediates targeting to the nucleus region. The mediates interaction with sodium channels stretch occupies residues 67–201 (KGIVTKLYSR…AHFLPKPLKV (135 aa)). At S208 the chain carries Phosphoserine. Residues 213-245 (TEFSRSGSGTPTKSRSVSGVLNGGKSMSHNEST) are disordered. A compositionally biased stretch (polar residues) spans 215–245 (FSRSGSGTPTKSRSVSGVLNGGKSMSHNEST).

This sequence belongs to the heparin-binding growth factors family. As to quaternary structure, interacts with SCN8A; regulates SCN8A activity. Interacts with SCN1A; may regulate SCN1A activity. Interacts with SCN5A; the interaction is direct and may regulate SNC5A density at membranes and function. May also interact with SCN2A and SCN11A. Interacts with MAPK8IP2; may regulate the MAPK8IP2 scaffolding activity. May be phosphorylated. In terms of tissue distribution, ubiquitously expressed. Predominantly expressed in the nervous system.

It localises to the nucleus. Its subcellular location is the cytoplasm. The protein resides in the cell projection. The protein localises to the filopodium. It is found in the growth cone. It localises to the dendrite. Its subcellular location is the cell membrane. The protein resides in the sarcolemma. Its function is as follows. Microtubule-binding protein which directly binds tubulin and is involved in both polymerization and stabilization of microtubules. Through its action on microtubules, may participate in the refinement of axons by negatively regulating axonal and leading processes branching. Plays a crucial role in neuron polarization and migration in the cerebral cortex and the hippocampus. Regulates voltage-gated sodium channel transport and function. May also play a role in MAPK signaling. Required for the development of axonal initial segment-targeting inhibitory GABAergic synapses made by chandelier neurons. The chain is Fibroblast growth factor 13 from Homo sapiens (Human).